The primary structure comprises 363 residues: Pyrimidine monooxygenase RutA (363 aa).

Residues 49–50, asparagine 115, glutamate 124, 140–141, and serine 190 each bind FMN; these read IK and RY.

The protein belongs to the NtaA/SnaA/DszA monooxygenase family. RutA subfamily.

The catalysed reaction is uracil + FMNH2 + NADH + O2 = (Z)-3-ureidoacrylate + FMN + NAD(+) + H2O + H(+). It carries out the reaction thymine + FMNH2 + NADH + O2 = (Z)-2-methylureidoacrylate + FMN + NAD(+) + H2O + H(+). In terms of biological role, catalyzes the pyrimidine ring opening between N-3 and C-4 by an unusual flavin hydroperoxide-catalyzed mechanism, adding oxygen atoms in the process to yield ureidoacrylate peracid, that immediately reacts with FMN forming ureidoacrylate and FMN-N(5)-oxide. The FMN-N(5)-oxide reacts spontaneously with NADH to produce FMN. Requires the flavin reductase RutF to regenerate FMN in vivo. The polypeptide is Pyrimidine monooxygenase RutA (Klebsiella pneumoniae subsp. pneumoniae (strain ATCC 700721 / MGH 78578)).